The chain runs to 192 residues: Adenylate kinase (192 aa).

Residue 10-15 (GAGKGT) coordinates ATP. The interval 30–59 (STGDMLRAAVAQATEVGKRAKAVMDAGQLV) is NMP. AMP-binding positions include T31, R36, 57-59 (QLV), 85-88 (GYPR), and Q92. An LID region spans residues 126–142 (NRVAETVAAGGTVRSDD). R127 provides a ligand contact to ATP. Residues R139 and R150 each coordinate AMP. A178 is an ATP binding site.

Belongs to the adenylate kinase family. Monomer.

The protein resides in the cytoplasm. It catalyses the reaction AMP + ATP = 2 ADP. It participates in purine metabolism; AMP biosynthesis via salvage pathway; AMP from ADP: step 1/1. Catalyzes the reversible transfer of the terminal phosphate group between ATP and AMP. Plays an important role in cellular energy homeostasis and in adenine nucleotide metabolism. This chain is Adenylate kinase, found in Sinorhizobium medicae (strain WSM419) (Ensifer medicae).